A 641-amino-acid chain; its full sequence is SUMO-activating enzyme subunit 2-A (641 aa).

Residues 24–29, aspartate 48, 56–59, lysine 72, 95–96, and 117–122 contribute to the ATP site; these read GAGGIG, NLNR, SI, and DNNAAR. Residues cysteine 158 and cysteine 161 each coordinate Zn(2+). The active-site Glycyl thioester intermediate is the cysteine 173. Zn(2+) contacts are provided by cysteine 439 and cysteine 442. A disordered region spans residues 546 to 641; that stretch reads GDVPEKGPQK…EEDDDIIALD (96 aa). Basic and acidic residues predominate over residues 548-561; the sequence is VPEKGPQKPPEESV. The segment covering 562 to 579 has biased composition (polar residues); that stretch reads KNITNGSDDGAQPSTSKA. Composition is skewed to acidic residues over residues 582–594 and 630–641; these read QDDVLIVDSDEES and PVEEDDDIIALD.

It belongs to the ubiquitin-activating E1 family. In terms of assembly, heterodimer of sae1 and uba2/sae2. The heterodimer corresponds to the two domains that are encoded on a single polypeptide chain in ubiquitin-activating enzyme E1. Interacts with ube2i.

Its subcellular location is the nucleus. Its pathway is protein modification; protein sumoylation. The heterodimer acts as an E1 ligase for sumo1, sumo2, and sumo3. It mediates ATP-dependent activation of sumo proteins followed by formation of a thioester bond between a sumo protein and a conserved active site cysteine residue on uba2/sae2. This is SUMO-activating enzyme subunit 2-A (uba2-a) from Xenopus laevis (African clawed frog).